Consider the following 328-residue polypeptide: Cysteine proteinase COT44 (328 aa).

Residues 1-99 (MSIYLRWSLE…KYSAAVNVDE (99 aa)) constitute a propeptide, activation peptide. Asn-48 and Asn-60 each carry an N-linked (GlcNAc...) asparagine glycan. Intrachain disulfides connect Cys-121–Cys-163, Cys-155–Cys-196, and Cys-254–Cys-305. Residue Cys-124 is part of the active site. Residues His-260 and Asn-280 contribute to the active site.

The protein belongs to the peptidase C1 family. As to expression, present in both cotyledons and axes.

In terms of biological role, may function in an early event in cortical cell differentiation. In Brassica napus (Rape), this protein is Cysteine proteinase COT44.